Here is a 903-residue protein sequence, read N- to C-terminus: DNA mismatch repair protein MutS (903 aa).

655-662 (GPNMAGKS) contributes to the ATP binding site.

The protein belongs to the DNA mismatch repair MutS family.

In terms of biological role, this protein is involved in the repair of mismatches in DNA. It is possible that it carries out the mismatch recognition step. This protein has a weak ATPase activity. The polypeptide is DNA mismatch repair protein MutS (Caulobacter vibrioides (strain ATCC 19089 / CIP 103742 / CB 15) (Caulobacter crescentus)).